We begin with the raw amino-acid sequence, 472 residues long: Ribosomal RNA small subunit methyltransferase F (472 aa).

Residues 123–129, Glu-147, Asp-174, and Asp-192 each bind S-adenosyl-L-methionine; that span reads AAAPGSK. The active-site Nucleophile is Cys-245.

The protein belongs to the class I-like SAM-binding methyltransferase superfamily. RsmB/NOP family.

The protein localises to the cytoplasm. The enzyme catalyses cytidine(1407) in 16S rRNA + S-adenosyl-L-methionine = 5-methylcytidine(1407) in 16S rRNA + S-adenosyl-L-homocysteine + H(+). Specifically methylates the cytosine at position 1407 (m5C1407) of 16S rRNA. The protein is Ribosomal RNA small subunit methyltransferase F of Vibrio vulnificus (strain CMCP6).